The following is a 240-amino-acid chain: Probable transcriptional regulatory protein OEOE_0768 (240 aa).

The tract at residues 1–21 (MSGHSKWHNIQGRKNAQDAKR) is disordered.

The protein belongs to the TACO1 family.

Its subcellular location is the cytoplasm. This is Probable transcriptional regulatory protein OEOE_0768 from Oenococcus oeni (strain ATCC BAA-331 / PSU-1).